The chain runs to 737 residues: DNA polymerase iota (737 aa).

One can recognise a UmuC domain in the interval 17–231 (IIHLDMDYFY…GDLKRVTGIG (215 aa)). Position 21 (aspartate 21) interacts with Mg(2+). Positions 26 and 58 each coordinate a 2'-deoxyribonucleoside 5'-triphosphate. Residue aspartate 113 coordinates Mg(2+). The active site involves glutamate 114. DNA-binding regions lie at residues 212-277 (TYAE…FGRD) and 288-413 (KTIG…SKFQ). Disordered regions lie at residues 443–464 (TSLT…RSSP), 482–515 (SPVP…SPKK), 557–581 (DSEK…RFRT), and 607–643 (LSSN…PSPT). Residues 491 to 502 (GSESAATNSDFS) are compositionally biased toward polar residues. 3 stretches are compositionally biased toward low complexity: residues 563–577 (PMST…APAP), 607–618 (LSSNASSTASSP), and 632–643 (PSTTTLPFPSPT). Positions 669 to 686 (VDAEVFKELPVELQTELI) match the Ubiquitin-binding (UBM) motif.

This sequence belongs to the DNA polymerase type-Y family. It depends on Mg(2+) as a cofactor. Mn(2+) serves as cofactor.

The protein localises to the nucleus. The catalysed reaction is DNA(n) + a 2'-deoxyribonucleoside 5'-triphosphate = DNA(n+1) + diphosphate. Error-prone DNA polymerase specifically involved in DNA repair. Plays an important role in translesion synthesis, where the normal high-fidelity DNA polymerases cannot proceed and DNA synthesis stalls. Favors Hoogsteen base-pairing in the active site. Inserts the correct base with higher fidelity opposite an adenosine template. Exhibits low fidelity and efficiency opposite a thymidine template, where it will preferentially insert guanosine. Forms a Schiff base with 5'-deoxyribose phosphate at abasic sites, but may not have lyase activity. This chain is DNA polymerase iota, found in Drosophila melanogaster (Fruit fly).